The sequence spans 638 residues: Zinc finger and BTB domain-containing protein 22 (638 aa).

The 65-residue stretch at 57-121 (CDVSIRVQGR…AYTGRLSMAA (65 aa)) folds into the BTB domain. Disordered regions lie at residues 171–223 (CASV…STSQ), 229–248 (SAAG…APVV), 335–354 (DDED…GEPE), and 367–451 (EPAD…HGAV). Residues 189–210 (SVRSHTSSRASENQSPSSSNYF) are compositionally biased toward polar residues. Serine 203 is subject to Phosphoserine. A C2H2-type 1; atypical zinc finger spans residues 483 to 504 (FLCHCGKAFSHKSMRDRHVNMH). 2 C2H2-type zinc fingers span residues 510 to 532 (FDCP…MKTH) and 538 to 559 (YECS…HRGH). The segment at 564–638 (HRMGVGGVGS…DFSGGGGAAH (75 aa)) is disordered.

This sequence belongs to the krueppel C2H2-type zinc-finger protein family.

The protein resides in the nucleus. Its function is as follows. May be involved in transcriptional regulation. The protein is Zinc finger and BTB domain-containing protein 22 (Zbtb22) of Mus musculus (Mouse).